Consider the following 659-residue polypeptide: Polyamine transporter 4 (659 aa).

Composition is skewed to polar residues over residues 1–20 and 28–45; these read MPSS…NIQQ and NVTN…TGSI. The segment at 1 to 81 is disordered; the sequence is MPSSLTKTES…LDWDGPDDPD (81 aa). At 1–99 the chain is on the cytoplasmic side; it reads MPSSLTKTES…KKWYTTMTSA (99 aa). The helical transmembrane segment at 100-120 threads the bilayer; sequence FLCLVVTMGSSLYVSSVPELV. The Extracellular portion of the chain corresponds to 121–128; the sequence is ERYHVSQT. Residues 129–149 traverse the membrane as a helical segment; that stretch reads LALAGLTFYLLGLSTVIGAPL. Over 150 to 157 the chain is Cytoplasmic; sequence SEVFGRKP. Residues 158–178 traverse the membrane as a helical segment; that stretch reads VYLFSLPVSMLFTMGVGLSNG. Topologically, residues 179–187 are extracellular; that stretch reads HMRIILPLR. A helical membrane pass occupies residues 188–208; the sequence is FLSGVFASPALSVGSGTILDI. Residues 209–215 lie on the Cytoplasmic side of the membrane; sequence FDVDQVS. The chain crosses the membrane as a helical span at residues 216 to 236; it reads VAMTYFVLSPFLGPVLSPIMA. Residues 237 to 246 lie on the Extracellular side of the membrane; the sequence is GFATEAKGWR. A helical membrane pass occupies residues 247-267; sequence WSEWIQLIAGGLILPFIALMP. Residues 268–316 are Cytoplasmic-facing; the sequence is ETHKGIILRKRAKKRNIALKKFSREAQKEFLKTTVTITILRPLKMLVVE. The helical transmembrane segment at 317 to 337 threads the bilayer; it reads PIVFVFSVYVAFIFAILFGFF. Residues 338 to 355 are Extracellular-facing; it reads EAYAVIYRGVYHMSMGIS. A helical membrane pass occupies residues 356–376; it reads GLPFIGIGVGLWIGAFFYLYI. The Cytoplasmic segment spans residues 377-423; that stretch reads DRKYLFPKPPAGTQPLTEKERTSKRTTPYRGARDAETGELLPVVPEK. Positions 387–408 are disordered; that stretch reads AGTQPLTEKERTSKRTTPYRGA. The helical transmembrane segment at 424-444 threads the bilayer; that stretch reads FLIACKFGSVALPIGLFWQAW. Topologically, residues 445 to 456 are extracellular; sequence TARSDVHWMAPV. The helical transmembrane segment at 457-477 threads the bilayer; it reads AAGVPFGFGLILIFFSVLMYF. The Cytoplasmic portion of the chain corresponds to 478–486; the sequence is STCYPPLTV. A helical transmembrane segment spans residues 487-509; that stretch reads ASCLAANNLLRYVMSSVFPLFTI. The Extracellular portion of the chain corresponds to 510–518; it reads QMYTKMKIK. The chain crosses the membrane as a helical span at residues 519 to 539; it reads WASTLFALVCVVMIPIPWVFE. At 540–659 the chain is on the cytoplasmic side; that stretch reads KWGSKLRHKS…MATDASARMV (120 aa). Over residues 587–602 the composition is skewed to basic and acidic residues; sequence METDPSTREKPGERLS. The interval 587–631 is disordered; the sequence is METDPSTREKPGERLSLRRTHTQPVPASFDREDGQHAQNRNEPIS. Phosphothreonine occurs at positions 589, 606, and 608. Polar residues predominate over residues 622–631; the sequence is HAQNRNEPIS. A phosphoserine mark is found at Ser-633 and Ser-646.

This sequence belongs to the major facilitator superfamily. DHA1 family. Polyamines/proton antiporter (TC 2.A.1.2.16) subfamily.

Its subcellular location is the cell membrane. In terms of biological role, cell membrane polyamine/proton antiporter, involved in the detoxification of excess polyamines in the cytoplasm. Recognizes spermidine, spermine and the antimalarial drug quinidine, but not quinine, chloroquine and mefloquine. The sequence is that of Polyamine transporter 4 (TPO4) from Saccharomyces cerevisiae (strain ATCC 204508 / S288c) (Baker's yeast).